Reading from the N-terminus, the 168-residue chain is Large ribosomal subunit protein uL10 (168 aa).

Belongs to the universal ribosomal protein uL10 family. As to quaternary structure, part of the ribosomal stalk of the 50S ribosomal subunit. The N-terminus interacts with L11 and the large rRNA to form the base of the stalk. The C-terminus forms an elongated spine to which L12 dimers bind in a sequential fashion forming a multimeric L10(L12)X complex.

In terms of biological role, forms part of the ribosomal stalk, playing a central role in the interaction of the ribosome with GTP-bound translation factors. The chain is Large ribosomal subunit protein uL10 from Clostridium acetobutylicum (strain ATCC 824 / DSM 792 / JCM 1419 / IAM 19013 / LMG 5710 / NBRC 13948 / NRRL B-527 / VKM B-1787 / 2291 / W).